Reading from the N-terminus, the 149-residue chain is Large ribosomal subunit protein bL9 (149 aa).

Belongs to the bacterial ribosomal protein bL9 family.

Binds to the 23S rRNA. In Xanthomonas campestris pv. campestris (strain 8004), this protein is Large ribosomal subunit protein bL9.